Here is a 294-residue protein sequence, read N- to C-terminus: Tyrosine recombinase XerC (294 aa).

The Core-binding (CB) domain maps to 1–85 (MSRLVEDFFA…ACRGFYTWLV (85 aa)). The Tyr recombinase domain occupies 106 to 283 (KLPRILDADE…DFQYLSKVYD (178 aa)). Catalysis depends on residues arginine 145, lysine 169, histidine 235, arginine 238, and histidine 261. Residue tyrosine 270 is the O-(3'-phospho-DNA)-tyrosine intermediate of the active site.

The protein belongs to the 'phage' integrase family. XerC subfamily. As to quaternary structure, forms a cyclic heterotetrameric complex composed of two molecules of XerC and two molecules of XerD.

The protein localises to the cytoplasm. Functionally, site-specific tyrosine recombinase, which acts by catalyzing the cutting and rejoining of the recombining DNA molecules. The XerC-XerD complex is essential to convert dimers of the bacterial chromosome into monomers to permit their segregation at cell division. It also contributes to the segregational stability of plasmids. This chain is Tyrosine recombinase XerC, found in Xylella fastidiosa (strain M23).